Here is a 117-residue protein sequence, read N- to C-terminus: Ig heavy chain V region 1-62-3 (117 aa).

Positions M1–F19 are cleaved as a signal peptide. The tract at residues Q20–T49 is framework-1. A complementarity-determining-1 region spans residues S50 to H54. The interval W55 to G68 is framework-2. A complementarity-determining-2 region spans residues R69 to S85. The framework-3 stretch occupies residues K86 to R117.

The protein is Ig heavy chain V region 1-62-3 (Ighv1-62-3) of Mus musculus (Mouse).